The primary structure comprises 435 residues: Casein kinase I homolog 2 (435 aa).

One can recognise a Protein kinase domain in the interval 12 to 282; that stretch reads YRVGRKIGEG…FLQELFDDVL (271 aa). ATP is bound by residues 18 to 26 and K41; that span reads IGEGSFGVI. The active-site Proton acceptor is the D131. S361 bears the Phosphoserine mark.

This sequence belongs to the protein kinase superfamily. CK1 Ser/Thr protein kinase family. Casein kinase I subfamily.

The protein resides in the cytoplasm. It carries out the reaction L-seryl-[protein] + ATP = O-phospho-L-seryl-[protein] + ADP + H(+). The enzyme catalyses L-threonyl-[protein] + ATP = O-phospho-L-threonyl-[protein] + ADP + H(+). Functionally, casein kinases are operationally defined by their preferential utilization of acidic proteins such as caseins as substrates. May contribute to the regulation of morphology. In Schizosaccharomyces pombe (strain 972 / ATCC 24843) (Fission yeast), this protein is Casein kinase I homolog 2 (cki2).